Here is a 144-residue protein sequence, read N- to C-terminus: Dynein light chain Tctex-type protein 2B (144 aa).

The protein belongs to the dynein light chain Tctex-type family. Light chain of the cytoplasmic dynein complex 2, a multisubunit complex composed at least of eleven different proteins. The cytoplasmic dynein 2 complex consists of two catalytic heavy chains (HCs) and a number of non-catalytic subunits presented by intermediate chains (ICs), light intermediate chains (LICs) and light chains (LCs). Among them, a heavy chain (DYNC2H1), two intermediate chains (DYNC2I2 and DYNC2I1), a light intermediate chain (DYNC2LI1), and a light chain (DYNLT2B) are unique to the dynein-2 complex, but a subset of the light chains are also shared by dynein-1 and dynein-2 complexes. The dimer DYNLT2B-DYNLT1/DYNLT3 interacts with DYNC2I1; this interaction is crucial for retrograde trafficking of ciliary proteins.

It localises to the dynein axonemal particle. Its function is as follows. Acts as one of several non-catalytic accessory components of the cytoplasmic dynein 2 complex (dynein-2 complex), a motor protein complex that drives the movement of cargos along microtubules within cilia and flagella in concert with the intraflagellar transport (IFT) system. Required for proper retrograde ciliary transport. The chain is Dynein light chain Tctex-type protein 2B (Dynlt2b) from Mus musculus (Mouse).